Here is a 51-residue protein sequence, read N- to C-terminus: Magnetosome protein Mms5 (51 aa).

The Lumenal portion of the chain corresponds to 1–12; that stretch reads MLSAKGVSLGLG. The interval 9-16 is LG region; sequence LGLGLGLG. Residues 13 to 33 traverse the membrane as a helical segment; it reads LGLGAWGPVLLGVVGVAGAIA. The Cytoplasmic segment spans residues 34–51; sequence LYGYYKNRNAEPAAAEAV.

The protein belongs to the magnetosome MamD/Mms5 family. In terms of processing, seen in gels as a band of about 5 kDa, with an N-terminus that corresponds to residue 8, suggesting it may undergo N-terminal cleavage.

The protein resides in the magnetosome membrane. Its function is as follows. Might be involved in magnetite crystal growth. In Paramagnetospirillum magneticum (strain ATCC 700264 / AMB-1) (Magnetospirillum magneticum), this protein is Magnetosome protein Mms5.